The sequence spans 274 residues: 4-hydroxy-3-methylbut-2-enyl diphosphate reductase (274 aa).

Cys-12 provides a ligand contact to [4Fe-4S] cluster. His-36 and His-70 together coordinate (2E)-4-hydroxy-3-methylbut-2-enyl diphosphate. Dimethylallyl diphosphate contacts are provided by His-36 and His-70. His-36 and His-70 together coordinate isopentenyl diphosphate. Cys-92 is a [4Fe-4S] cluster binding site. His-120 provides a ligand contact to (2E)-4-hydroxy-3-methylbut-2-enyl diphosphate. Position 120 (His-120) interacts with dimethylallyl diphosphate. His-120 contacts isopentenyl diphosphate. Glu-122 serves as the catalytic Proton donor. Thr-158 lines the (2E)-4-hydroxy-3-methylbut-2-enyl diphosphate pocket. Residue Cys-186 participates in [4Fe-4S] cluster binding. The (2E)-4-hydroxy-3-methylbut-2-enyl diphosphate site is built by Ser-214, Ser-215, Asn-216, and Ser-258. Positions 214, 215, 216, and 258 each coordinate dimethylallyl diphosphate. Residues Ser-214, Ser-215, Asn-216, and Ser-258 each contribute to the isopentenyl diphosphate site.

It belongs to the IspH family. It depends on [4Fe-4S] cluster as a cofactor.

It catalyses the reaction isopentenyl diphosphate + 2 oxidized [2Fe-2S]-[ferredoxin] + H2O = (2E)-4-hydroxy-3-methylbut-2-enyl diphosphate + 2 reduced [2Fe-2S]-[ferredoxin] + 2 H(+). The catalysed reaction is dimethylallyl diphosphate + 2 oxidized [2Fe-2S]-[ferredoxin] + H2O = (2E)-4-hydroxy-3-methylbut-2-enyl diphosphate + 2 reduced [2Fe-2S]-[ferredoxin] + 2 H(+). Its pathway is isoprenoid biosynthesis; dimethylallyl diphosphate biosynthesis; dimethylallyl diphosphate from (2E)-4-hydroxy-3-methylbutenyl diphosphate: step 1/1. It functions in the pathway isoprenoid biosynthesis; isopentenyl diphosphate biosynthesis via DXP pathway; isopentenyl diphosphate from 1-deoxy-D-xylulose 5-phosphate: step 6/6. In terms of biological role, catalyzes the conversion of 1-hydroxy-2-methyl-2-(E)-butenyl 4-diphosphate (HMBPP) into a mixture of isopentenyl diphosphate (IPP) and dimethylallyl diphosphate (DMAPP). Acts in the terminal step of the DOXP/MEP pathway for isoprenoid precursor biosynthesis. The sequence is that of 4-hydroxy-3-methylbut-2-enyl diphosphate reductase from Helicobacter pylori (strain P12).